The primary structure comprises 355 residues: 3'-5' exonuclease (355 aa).

Residues 1-121 (MDKYLIKLPN…PSPEKEKPEK (121 aa)) are disordered. Basic and acidic residues-rich tracts occupy residues 17–29 (VSDKKEVVKKETP), 36–50 (AKKDTPKQEKEKENT), and 72–92 (KNLDTPEVTQEKESVESENPP). Phosphoserine is present on residues S105 and S113. In terms of domain architecture, 3'-5' exonuclease spans 147–315 (VMQWVEKQKE…GQVIYRDLEQ (169 aa)). Mg(2+) is bound by residues D164, E166, and D302.

This sequence belongs to the WRNexo family.

It is found in the nucleus. Its function is as follows. Has exonuclease activity on both single-stranded and duplex templates bearing overhangs, but not blunt ended duplex DNA, and cleaves in a 3'-5' direction. Essential for the formation of DNA replication focal centers. Has an important role in maintaining genome stability. This chain is 3'-5' exonuclease, found in Drosophila ananassae (Fruit fly).